A 474-amino-acid polypeptide reads, in one-letter code: PTS system N-acetylmuramic acid-specific EIIBC component (474 aa).

Positions 1–89 (MAKEISSELL…SELLGDAPVQ (89 aa)) constitute a PTS EIIB type-1 domain. At 1 to 123 (MAKEISSELL…LAKFATIFTP (123 aa)) the chain is on the cytoplasmic side. The active-site Phosphocysteine intermediate; for EIIB activity is C29. Residues 115–474 (AKFATIFTPL…LFGCRNVNLD (360 aa)) form the PTS EIIC type-1 domain. The chain crosses the membrane as a helical span at residues 124 to 144 (LIPGFIAAGLLLGIATLIATV). Residues 145-157 (MHVPADAQGTLPD) are Periplasmic-facing. A helical membrane pass occupies residues 158–178 (ALNFMKVFSKGLFTFLVILVG). Over 179-180 (YN) the chain is Cytoplasmic. The helical transmembrane segment at 181–201 (AAQAFGGTGVNGAIIAALFLL) threads the bilayer. Over 202–217 (GYNPAATTGYYAGFHD) the chain is Periplasmic. The helical transmembrane segment at 218–238 (FFGLPIDPRGNIIGVLIAAWA) threads the bilayer. Topologically, residues 239–260 (CARIEGMVRRFMPDDLDMLLTS) are cytoplasmic. Residues 261–281 (LITLLITATLAYLIIMPLGGW) traverse the membrane as a helical segment. The Periplasmic segment spans residues 282-301 (LFEGMSWLFMHLNSNPFGCA). Residues 302–322 (VLAGLFLIAVVFGVHQGFIPV) form a helical membrane-spanning segment. Over 323-334 (YLALMDSQGFNS) the chain is Cytoplasmic. The helical transmembrane segment at 335 to 355 (LFPILSMAGAGQVGAALALYW) threads the bilayer. Residues 356 to 368 (RAQPHSALRSQVR) lie on the Periplasmic side of the membrane. A helical membrane pass occupies residues 369 to 389 (GAIIPGLLGVGEPLIYGVTLP). Residues 390-393 (RMKP) are Cytoplasmic-facing. A helical transmembrane segment spans residues 394–414 (FVTACLGGAAGGLFIGLIAWW). The Periplasmic segment spans residues 415–440 (GLPMGLNSAFGPSGLVALPLMTSAQG). Residues 441-461 (ILPAMAVYAGGILVAWVCGFI) form a helical membrane-spanning segment. The Cytoplasmic segment spans residues 462–474 (FTTLFGCRNVNLD).

The protein localises to the cell inner membrane. It carries out the reaction N-acetyl-beta-D-muramate(out) + N(pros)-phospho-L-histidyl-[protein] = N-acetyl-beta-D-muramate 6-phosphate(in) + L-histidyl-[protein]. Its function is as follows. The phosphoenolpyruvate-dependent sugar phosphotransferase system (sugar PTS), a major carbohydrate active transport system, catalyzes the phosphorylation of incoming sugar substrates concomitantly with their translocation across the cell membrane. This system is involved in N-acetylmuramic acid (MurNAc) transport, yielding cytoplasmic MurNAc-6-P. Is also able to take up anhydro-N-acetylmuramic acid (anhMurNAc), but cannot phosphorylate the carbon 6, probably because of the 1,6-anhydro ring. The protein is PTS system N-acetylmuramic acid-specific EIIBC component (murP) of Shigella flexneri.